The primary structure comprises 518 residues: Glutamate--cysteine ligase (518 aa).

This sequence belongs to the glutamate--cysteine ligase type 1 family. Type 1 subfamily.

It catalyses the reaction L-cysteine + L-glutamate + ATP = gamma-L-glutamyl-L-cysteine + ADP + phosphate + H(+). It functions in the pathway sulfur metabolism; glutathione biosynthesis; glutathione from L-cysteine and L-glutamate: step 1/2. The chain is Glutamate--cysteine ligase from Salmonella agona (strain SL483).